A 194-amino-acid polypeptide reads, in one-letter code: ATP-dependent Clp protease proteolytic subunit (194 aa).

Ser-98 serves as the catalytic Nucleophile. The active site involves His-123.

It belongs to the peptidase S14 family. As to quaternary structure, fourteen ClpP subunits assemble into 2 heptameric rings which stack back to back to give a disk-like structure with a central cavity, resembling the structure of eukaryotic proteasomes.

The protein resides in the cytoplasm. The enzyme catalyses Hydrolysis of proteins to small peptides in the presence of ATP and magnesium. alpha-casein is the usual test substrate. In the absence of ATP, only oligopeptides shorter than five residues are hydrolyzed (such as succinyl-Leu-Tyr-|-NHMec, and Leu-Tyr-Leu-|-Tyr-Trp, in which cleavage of the -Tyr-|-Leu- and -Tyr-|-Trp bonds also occurs).. Its function is as follows. Cleaves peptides in various proteins in a process that requires ATP hydrolysis. Has a chymotrypsin-like activity. Plays a major role in the degradation of misfolded proteins. The chain is ATP-dependent Clp protease proteolytic subunit from Staphylococcus saprophyticus subsp. saprophyticus (strain ATCC 15305 / DSM 20229 / NCIMB 8711 / NCTC 7292 / S-41).